We begin with the raw amino-acid sequence, 479 residues long: Putative L-cysteine desulfhydrase 2 (479 aa).

The segment at 1–36 (MASLQSGGDAAANGVDADVDGAASPPSAKRPRAGAG) is disordered. The span at 7-36 (GGDAAANGVDADVDGAASPPSAKRPRAGAG) shows a compositional bias: low complexity. At lysine 270 the chain carries N6-(pyridoxal phosphate)lysine.

It belongs to the class-V pyridoxal-phosphate-dependent aminotransferase family. The cofactor is pyridoxal 5'-phosphate.

It catalyses the reaction L-cysteine + H2O = hydrogen sulfide + pyruvate + NH4(+) + H(+). In terms of biological role, catalyzes the production of hydrogen sulfide (H2S) from cysteine. This is Putative L-cysteine desulfhydrase 2 from Oryza sativa subsp. japonica (Rice).